A 601-amino-acid polypeptide reads, in one-letter code: Glutathione-regulated potassium-efflux system protein KefB (601 aa).

A run of 13 helical transmembrane segments spans residues 4–24 (ADLLTAGVLFLFAAVAAVPLA), 29–49 (IGAVLGYLLAGIAIGPWGLGF), 55–75 (EILHFSELGVVFLMFIIGLEL), 87–107 (IFGVGAAQVLLSAAVLAGLLM), 111–131 (FLWQAAVVGGIGLAMSSTAMA), 152–172 (VLLFQDLAVIPALALVPLLAG), 177–197 (HFDWFKVAMKVLAFAVMLIGG), 207–227 (FIAASGVREVFTAATLLLVLS), 230–250 (LFMDALGLSMALGTFIAGVLL), 262–282 (AIDPFKGLLLGLFFISVGMSL), 284–304 (LGVLYTHLLWVAASVVILVVI), 324–344 (MQFASVLSQGGEFAFVLFSTA), and 356–376 (ALLLVTVTLSMMTTPLLMKGI). The region spanning 400-519 (KPQVIVVGFG…AGVTQFSRET (120 aa)) is the RCK N-terminal domain.

It belongs to the monovalent cation:proton antiporter 2 (CPA2) transporter (TC 2.A.37) family. KefB subfamily. In terms of assembly, interacts with the regulatory subunit KefG.

Its subcellular location is the cell inner membrane. Its function is as follows. Pore-forming subunit of a potassium efflux system that confers protection against electrophiles. Catalyzes K(+)/H(+) antiport. In Salmonella enteritidis PT4 (strain P125109), this protein is Glutathione-regulated potassium-efflux system protein KefB.